The chain runs to 1235 residues: ATP-dependent helicase/nuclease subunit A (1235 aa).

Residues 3-471 (TKWTETQKSA…IKLSENFRSR (469 aa)) form the UvrD-like helicase ATP-binding domain. 24-31 (AGAGTGKT) serves as a coordination point for ATP. Positions 509–808 (PFEGNCGGDV…RIMSIHKSKG (300 aa)) constitute a UvrD-like helicase C-terminal domain.

This sequence belongs to the helicase family. AddA subfamily. In terms of assembly, heterodimer of AddA and AddB/RexB. Mg(2+) is required as a cofactor.

The enzyme catalyses Couples ATP hydrolysis with the unwinding of duplex DNA by translocating in the 3'-5' direction.. The catalysed reaction is ATP + H2O = ADP + phosphate + H(+). The heterodimer acts as both an ATP-dependent DNA helicase and an ATP-dependent, dual-direction single-stranded exonuclease. Recognizes the chi site generating a DNA molecule suitable for the initiation of homologous recombination. The AddA nuclease domain is required for chi fragment generation; this subunit has the helicase and 3' -&gt; 5' nuclease activities. This Clostridium kluyveri (strain ATCC 8527 / DSM 555 / NBRC 12016 / NCIMB 10680 / K1) protein is ATP-dependent helicase/nuclease subunit A.